The primary structure comprises 717 residues: Adhesion cell surface protein MAD1 (717 aa).

Residues 1-19 form the signal peptide; that stretch reads MKSALSVVVAAAGVQQASA. Composition is skewed to low complexity over residues 237–254 and 262–274; these read TPVT…QTTT and SKET…QTTP. Disordered stretches follow at residues 237–392 and 451–506; these read TPVT…ATTT and RTQS…TPPC. 8 repeat units span residues 275-286, 287-298, 299-310, 311-328, 329-340, 341-352, 353-364, and 365-376. Over residues 275 to 366 the composition is skewed to polar residues; the sequence is GKETTPAQQT…TPAQQTTPGK (92 aa). Low complexity-rich tracts occupy residues 368-392 and 484-503; these read TTPA…ATTT and QPTG…STQT. Residues 481–595 enclose the CFEM domain; that stretch reads TPEQPTGEKP…TQIITVTGTP (115 aa). 3 cysteine pairs are disulfide-bonded: cysteine 513/cysteine 546, cysteine 524/cysteine 532, and cysteine 534/cysteine 568. Residue aspartate 529 participates in heme binding. N-linked (GlcNAc...) asparagine glycosylation is present at asparagine 614. The tract at residues 632–690 is disordered; it reads PTPTGGVPNQPPATASVPAGQNPPPVTGQNPPPAVTDQSPPPAITTGTGGVIPPKPTGS. Residues 652 to 674 are compositionally biased toward pro residues; the sequence is QNPPPVTGQNPPPAVTDQSPPPA. Alanine 695 carries the GPI-anchor amidated alanine lipid modification. Positions 696 to 717 are cleaved as a propeptide — removed in mature form; that stretch reads GSGRVGAGLGMVLAVAAFVAAL.

The protein belongs to the RBT5 family. Post-translationally, the GPI-anchor is attached to the protein in the endoplasmic reticulum and serves to target the protein to the cell surface. There, the glucosamine-inositol phospholipid moiety is cleaved off and the GPI-modified mannoprotein is covalently attached via its lipidless GPI glycan remnant to the 1,6-beta-glucan of the outer cell wall layer.

It localises to the secreted. It is found in the cell wall. Its subcellular location is the cell membrane. Functionally, cell surface adhesion protein that plays a key role in virulence by allowing adherence to the insect host surface. Required to orientate the cytoskeleton and stimulate the expression of genes involved in the cell cycle. Is also involved in achieving the septin hourglass shape and subsequent separation of cells. This Metarhizium anisopliae (Entomophthora anisopliae) protein is Adhesion cell surface protein MAD1.